The chain runs to 404 residues: Homocysteine-responsive endoplasmic reticulum-resident ubiquitin-like domain member 2 protein (404 aa).

The Ubiquitin-like domain maps to 10–89 (VTLIIKAPNQ…HMVHLVCASR (80 aa)). The segment at 86–153 (CASRSPPSSP…TLSQAQTDPA (68 aa)) is disordered. 2 stretches are compositionally biased toward low complexity: residues 88 to 97 (SRSPPSSPKS) and 109 to 126 (SSTS…PSPS). Residues 127 to 153 (QESLSLVTGSSEGLRQRTLSQAQTDPA) are compositionally biased toward polar residues. The helical transmembrane segment at 301 to 321 (FIMVMGAMLLVYLHQAGWFPF) threads the bilayer.

It localises to the membrane. Its function is as follows. Could be involved in the unfolded protein response (UPR) pathway. The protein is Homocysteine-responsive endoplasmic reticulum-resident ubiquitin-like domain member 2 protein (Herpud2) of Mus musculus (Mouse).